Here is a 528-residue protein sequence, read N- to C-terminus: Oxamate amidohydrolase proenzyme (528 aa).

The active-site Nucleophile is T342. 424–425 (GG) lines the substrate pocket.

The protein belongs to the gamma-glutamyltransferase family. Heterodimer that consists of a 35.5 kDa large (alpha) subunit and a 20 kDa small (beta) subunit, which are synthesized from a single polypeptide. Post-translationally, cleaved by autocatalysis into a large (alpha) and a small (beta) subunit.

It catalyses the reaction oxamate + H2O = oxalate + NH4(+). Involved in the uric acid degradation pathway. Catalyzes the conversion of oxamate to oxalate. The polypeptide is Oxamate amidohydrolase proenzyme (Klebsiella pneumoniae subsp. pneumoniae (strain ATCC 700721 / MGH 78578)).